The chain runs to 972 residues: Macrophage colony-stimulating factor 1 receptor (972 aa).

The N-terminal stretch at 1–19 (MGPGVLLLLLVATAWHGQG) is a signal peptide. The Extracellular portion of the chain corresponds to 20-517 (IPVIEPSVPE…HPPDEFLFTP (498 aa)). Ig-like C2-type domains follow at residues 21–104 (PVIE…VKDP), 107–197 (PWNV…KVQK), 203–290 (PALT…HSTS), 299–399 (AYLN…LTLR), and 402–502 (PEVS…IPIS). 3 cysteine pairs are disulfide-bonded: Cys-42–Cys-84, Cys-127–Cys-177, and Cys-224–Cys-278. 11 N-linked (GlcNAc...) asparagine glycosylation sites follow: Asn-45, Asn-73, Asn-153, Asn-240, Asn-275, Asn-302, Asn-335, Asn-353, Asn-412, Asn-428, and Asn-480. A disulfide bridge connects residues Cys-419 and Cys-485. The helical transmembrane segment at 518–538 (VVVACMSIMALLLLLLLLLLY) threads the bilayer. Over 539 to 972 (KYKQKPKYQV…LLQPNNYQFC (434 aa)) the chain is Cytoplasmic. The segment at 542 to 574 (QKPKYQVRWKIIESYEGNSYTFIDPTQLPYNEK) is regulatory juxtamembrane domain. 2 positions are modified to phosphotyrosine; by autocatalysis: Tyr-546 and Tyr-561. The Protein kinase domain occupies 582-910 (LQFGKTLGAG…PTFQQICSFL (329 aa)). Residues 588-596 (LGAGAFGKV) and Lys-616 each bind ATP. Phosphotyrosine; by autocatalysis is present on residues Tyr-699 and Tyr-708. Ser-713 carries the phosphoserine modification. Tyr-723 carries the phosphotyrosine; by autocatalysis modification. Residue Asp-778 is the Proton acceptor of the active site. An activation loop region spans residues 796–818 (DFGLARDIMNDSNYIVKGNARLP). Tyr-809 and Tyr-923 each carry phosphotyrosine; by autocatalysis. A disordered region spans residues 918-950 (RRERDYTNLPSSSRSGGSGSSSSELEEESSSEH). The segment covering 928–940 (SSSRSGGSGSSSS) has biased composition (low complexity). Tyr-969 carries the post-translational modification Phosphotyrosine; by autocatalysis.

Belongs to the protein kinase superfamily. Tyr protein kinase family. CSF-1/PDGF receptor subfamily. Interacts with INPPL1/SHIP2 and THOC5. Monomer. Homodimer. Interacts with CSF1 and IL34. Interaction with dimeric CSF1 or IL34 leads to receptor homodimerization. Interacts (tyrosine phosphorylated) with PLCG2 (via SH2 domain). Interacts (tyrosine phosphorylated) with PIK3R1 (via SH2 domain). Interacts (tyrosine phosphorylated) with FYN, YES1 and SRC (via SH2 domain). Interacts (tyrosine phosphorylated) with CBL, GRB2 and SLA2. Post-translationally, autophosphorylated in response to CSF1 or IL34 binding. Phosphorylation at Tyr-561 is important for normal down-regulation of signaling by ubiquitination, internalization and degradation. Phosphorylation at Tyr-561 and Tyr-809 is important for interaction with SRC family members, including FYN, YES1 and SRC, and for subsequent activation of these protein kinases. Phosphorylation at Tyr-699 and Tyr-923 is important for interaction with GRB2. Phosphorylation at Tyr-723 is important for interaction with PIK3R1. Phosphorylation at Tyr-708 is important for normal receptor degradation. Phosphorylation at Tyr-723 and Tyr-809 is important for interaction with PLCG2. Phosphorylation at Tyr-969 is important for interaction with CBL. Dephosphorylation by PTPN2 negatively regulates downstream signaling and macrophage differentiation. In terms of processing, ubiquitinated. Becomes rapidly polyubiquitinated after autophosphorylation, leading to its degradation. In terms of tissue distribution, expressed in bone marrow and in differentiated blood mononuclear cells.

The protein resides in the cell membrane. The catalysed reaction is L-tyrosyl-[protein] + ATP = O-phospho-L-tyrosyl-[protein] + ADP + H(+). Present in an inactive conformation in the absence of bound ligand. CSF1 or IL34 binding leads to dimerization and activation by autophosphorylation on tyrosine residues. Inhibited by imatinib/STI-571 (Gleevec), dasatinib, sunitinib/SU11248, lestaurtinib/CEP-701, midostaurin/PKC-412, Ki20227, linifanib/ABT-869, Axitinib/AG013736, sorafenib/BAY 43-9006 and GW2580. Functionally, tyrosine-protein kinase that acts as a cell-surface receptor for CSF1 and IL34 and plays an essential role in the regulation of survival, proliferation and differentiation of hematopoietic precursor cells, especially mononuclear phagocytes, such as macrophages and monocytes. Promotes the release of pro-inflammatory chemokines in response to IL34 and CSF1, and thereby plays an important role in innate immunity and in inflammatory processes. Plays an important role in the regulation of osteoclast proliferation and differentiation, the regulation of bone resorption, and is required for normal bone and tooth development. Required for normal male and female fertility, and for normal development of milk ducts and acinar structures in the mammary gland during pregnancy. Promotes reorganization of the actin cytoskeleton, regulates formation of membrane ruffles, cell adhesion and cell migration, and promotes cancer cell invasion. Activates several signaling pathways in response to ligand binding, including the ERK1/2 and the JNK pathway. Phosphorylates PIK3R1, PLCG2, GRB2, SLA2 and CBL. Activation of PLCG2 leads to the production of the cellular signaling molecules diacylglycerol and inositol 1,4,5-trisphosphate, that then lead to the activation of protein kinase C family members, especially PRKCD. Phosphorylation of PIK3R1, the regulatory subunit of phosphatidylinositol 3-kinase, leads to activation of the AKT1 signaling pathway. Activated CSF1R also mediates activation of the MAP kinases MAPK1/ERK2 and/or MAPK3/ERK1, and of the SRC family kinases SRC, FYN and YES1. Activated CSF1R transmits signals both via proteins that directly interact with phosphorylated tyrosine residues in its intracellular domain, or via adapter proteins, such as GRB2. Promotes activation of STAT family members STAT3, STAT5A and/or STAT5B. Promotes tyrosine phosphorylation of SHC1 and INPP5D/SHIP-1. Receptor signaling is down-regulated by protein phosphatases, such as INPP5D/SHIP-1, that dephosphorylate the receptor and its downstream effectors, and by rapid internalization of the activated receptor. In the central nervous system, may play a role in the development of microglia macrophages. In Homo sapiens (Human), this protein is Macrophage colony-stimulating factor 1 receptor (CSF1R).